A 118-amino-acid polypeptide reads, in one-letter code: Aspartate 1-decarboxylase (118 aa).

Catalysis depends on S25, which acts as the Schiff-base intermediate with substrate; via pyruvic acid. S25 carries the pyruvic acid (Ser) modification. T57 contacts substrate. Residue Y58 is the Proton donor of the active site. Position 73 to 75 (73 to 75 (GAA)) interacts with substrate.

It belongs to the PanD family. As to quaternary structure, heterooctamer of four alpha and four beta subunits. Requires pyruvate as cofactor. In terms of processing, is synthesized initially as an inactive proenzyme, which is activated by self-cleavage at a specific serine bond to produce a beta-subunit with a hydroxyl group at its C-terminus and an alpha-subunit with a pyruvoyl group at its N-terminus.

Its subcellular location is the cytoplasm. It catalyses the reaction L-aspartate + H(+) = beta-alanine + CO2. It participates in cofactor biosynthesis; (R)-pantothenate biosynthesis; beta-alanine from L-aspartate: step 1/1. Catalyzes the pyruvoyl-dependent decarboxylation of aspartate to produce beta-alanine. This chain is Aspartate 1-decarboxylase, found in Leptospira biflexa serovar Patoc (strain Patoc 1 / Ames).